Reading from the N-terminus, the 212-residue chain is Large ribosomal subunit protein mL48 (212 aa).

The N-terminal 28 residues, 1-28, are a transit peptide targeting the mitochondrion; sequence MSGTLEKVLCLRNNTIFKQAFSLLRFRT. N6-succinyllysine is present on lysine 199.

The protein belongs to the mitochondrion-specific ribosomal protein mL48 family. As to quaternary structure, component of the mitochondrial large ribosomal subunit (mt-LSU). Mature mammalian 55S mitochondrial ribosomes consist of a small (28S) and a large (39S) subunit. The 28S small subunit contains a 12S ribosomal RNA (12S mt-rRNA) and 30 different proteins. The 39S large subunit contains a 16S rRNA (16S mt-rRNA), a copy of mitochondrial valine transfer RNA (mt-tRNA(Val)), which plays an integral structural role, and 52 different proteins. mL48 is located at the central protuberance. Interacts with OXA1L.

It localises to the mitochondrion. The protein is Large ribosomal subunit protein mL48 (MRPL48) of Homo sapiens (Human).